Here is a 258-residue protein sequence, read N- to C-terminus: Uridylate cyclase (258 aa).

The region spanning 50–190 is the Guanylate cyclase domain; it reads AAIFIDLRGS…DVVNKASKMC (141 aa). Residue Phe53 coordinates a ribonucleoside 5'-triphosphate. The Mn(2+) site is built by Asp55 and Asp102.

Belongs to the adenylyl cyclase class-4/guanylyl cyclase family. Pyrimidine cyclase subfamily. Homodimer. Requires Mn(2+) as cofactor.

The protein localises to the cytoplasm. It catalyses the reaction UTP = 3',5'-cyclic UMP + diphosphate. Functionally, pycsar (pyrimidine cyclase system for antiphage resistance) provides immunity against bacteriophage. The pyrimidine cyclase (PycC) synthesizes cyclic nucleotides in response to infection; these serve as specific second messenger signals. The signals activate the adjacent effector, leading to bacterial cell death and abortive phage infection. A clade C Pycsar system. The pyrimidine cyclase gene of a two-gene Pycsar system, weakly generates cyclic UMP (cUMP) from UTP, has little to no activity on ATP, CTP or GTP. Expression of this and adjacent effector GmPycTM (AC P0DV43) probably confers resistance to bacteriophage. The genes are probably only expressed in response to bacteriophage infection. The chain is Uridylate cyclase from Gulbenkiania mobilis.